The chain runs to 325 residues: Zinc metalloproteinase/disintegrin (325 aa).

Positions 1-39 (KYENVEKGDEAPKKCGVTHTNLESDEPIEKASQLFGTSE) are excised as a propeptide. A Pyrrolidone carboxylic acid modification is found at Gln-40. Positions 46–242 (RHIELVIVAD…HNPQRILNEP (197 aa)) constitute a Peptidase M12B domain. His-182 is a Zn(2+) binding site. The active site involves Glu-183. Zn(2+) is bound by residues His-186 and His-192. 2 disulfide bridges follow: Cys-197–Cys-221 and Cys-199–Cys-204. Residues 243-257 (LRTDTVSTPVYGNVL) constitute a propeptide that is removed on maturation. One can recognise a Disintegrin domain in the interval 250 to 322 (TPVYGNVLQN…SECESNPWNF (73 aa)). The residue at position 258 (Gln-258) is a Pyrrolidone carboxylic acid. Intrachain disulfides connect Cys-264–Cys-287, Cys-278–Cys-284, Cys-283–Cys-308, and Cys-296–Cys-315. A Cell attachment site motif is present at residues 300–302 (RGD).

Belongs to the venom metalloproteinase (M12B) family. P-II subfamily. P-IIe sub-subfamily. In terms of assembly, heterodimer of bitisgabonin and gabonin-1 (bitisgabonin-1) or gabonin-2 (bitisgabonin-2); disulfide-linked. Zn(2+) is required as a cofactor. As to expression, expressed by the venom gland.

It localises to the secreted. In terms of biological role, impairs hemostasis in the envenomed animal. Its function is as follows. In dimer with gabonin-1 (bitisgabonin-1), is a potent inhibitor of the adhesion of the RGD-dependent integrin alpha-5/beta-1 (ITGA5/ITGB1) to immobilized fibronectin. Functionally, in dimer with gabonin-2 (bitisgabonin-2), preferentially inhibits the adhesion of the alpha-4/beta-1 (ITGA4/ITGB1) and alpha-9/beta-1 (ITGA9/ITGB1) integrins to VCAM-1 and also acts as a strong antagonist of alpha-5/beta-1 (ITGA5/ITGB1). The chain is Zinc metalloproteinase/disintegrin from Bitis gabonica (Gaboon adder).